Consider the following 158-residue polypeptide: MQGTLSVWLAKRGLVHRSLGFDYQGIETLQIKPEDWDSIAVILYVYGYNYLRSQCAYDVAPGGLLASVYHLTRIEYGVNQAEEVCIKVFTHRSNPRIPSVFWVWKSTDFQERESYDMLGITYDSHPRLKRILMPESWIGWPLRKDYIAPNFYEIQDAY.

The protein belongs to the complex I 30 kDa subunit family. NDH is composed of at least 16 different subunits, 5 of which are encoded in the nucleus.

The protein localises to the plastid. It is found in the chloroplast thylakoid membrane. It catalyses the reaction a plastoquinone + NADH + (n+1) H(+)(in) = a plastoquinol + NAD(+) + n H(+)(out). It carries out the reaction a plastoquinone + NADPH + (n+1) H(+)(in) = a plastoquinol + NADP(+) + n H(+)(out). Functionally, NDH shuttles electrons from NAD(P)H:plastoquinone, via FMN and iron-sulfur (Fe-S) centers, to quinones in the photosynthetic chain and possibly in a chloroplast respiratory chain. The immediate electron acceptor for the enzyme in this species is believed to be plastoquinone. Couples the redox reaction to proton translocation, and thus conserves the redox energy in a proton gradient. The protein is NAD(P)H-quinone oxidoreductase subunit J, chloroplastic of Nasturtium officinale (Watercress).